The sequence spans 232 residues: Ubiquinone biosynthesis O-methyltransferase (232 aa).

4 residues coordinate S-adenosyl-L-methionine: arginine 36, glycine 55, aspartate 76, and leucine 120.

This sequence belongs to the methyltransferase superfamily. UbiG/COQ3 family.

It carries out the reaction a 3-demethylubiquinol + S-adenosyl-L-methionine = a ubiquinol + S-adenosyl-L-homocysteine + H(+). The enzyme catalyses a 3-(all-trans-polyprenyl)benzene-1,2-diol + S-adenosyl-L-methionine = a 2-methoxy-6-(all-trans-polyprenyl)phenol + S-adenosyl-L-homocysteine + H(+). The protein operates within cofactor biosynthesis; ubiquinone biosynthesis. In terms of biological role, O-methyltransferase that catalyzes the 2 O-methylation steps in the ubiquinone biosynthetic pathway. This Azotobacter vinelandii (strain DJ / ATCC BAA-1303) protein is Ubiquinone biosynthesis O-methyltransferase.